Consider the following 302-residue polypeptide: Ubiquitin thioesterase OTU1 (302 aa).

The interval 5–83 (RCKARSGTQP…IVEEDTSKPS (79 aa)) is UBX-like. The region spanning 103–228 (LARRVVPADN…GIHYDPLERK (126 aa)) is the OTU domain. The segment at 108–114 (VPADNSC) is cys-loop. Asp111 is an active-site residue. Cys114 functions as the Nucleophile in the catalytic mechanism. The interval 167-177 (IRREETWGGAI) is variable-loop. The tract at residues 217–221 (YDGIH) is his-loop. Ile220 lines the substrate pocket. His221 is an active-site residue. Residues 245-250 (DVVLAQ) are S2 site. The segment at 272–296 (LRCMVCQKGLTGQVEAREHAKETGH) adopts a C2H2-type zinc-finger fold. Residue His296 is part of the active site.

It is found in the cytoplasm. The catalysed reaction is Thiol-dependent hydrolysis of ester, thioester, amide, peptide and isopeptide bonds formed by the C-terminal Gly of ubiquitin (a 76-residue protein attached to proteins as an intracellular targeting signal).. In terms of biological role, hydrolase that can remove conjugated ubiquitin from proteins and participates in endoplasmic reticulum-associated degradation (ERAD) for misfolded lumenal proteins. May act by triming the ubiquitin chain on the associated substrate to facilitate their threading through the VCP/p97 pore. Ubiquitin moieties on substrates may present a steric impediment to the threading process when the substrate is transferred to the VCP pore and threaded through VCP's axial channel. Mediates deubiquitination of 'Lys-27'-, 'Lys-29'- and 'Lys-33'-linked polyubiquitin chains. Also able to hydrolyze 'Lys-11'-linked ubiquitin chains. Cleaves both polyubiquitin and di-ubiquitin. The chain is Ubiquitin thioesterase OTU1 (YOD1) from Gallus gallus (Chicken).